A 403-amino-acid polypeptide reads, in one-letter code: MSPFIFAVTLTFAILALGILRRRYFHPLSRFPGPFLGSVTSLYQTYWHVHPNKTLHDTELHRKYGPIVRYSPNGLIVNDPALLPVIYNRRANKTDFYAPVFDTHSTFTRKDYREHVASRKAISHAVGFLAFFRTEYSYGLVLLMIIFKQYSVTNTRLFEPQVDGILSELAGSSVTPSQLARVIFHISRNFKVQEKLYEELVAAEQDGRIPPLSAIISDEQAHRLPFLSACIREAQRYAPTMSQLPRYAPEGTGLELHEQYVPPGTSVSTSPWIIGRNKDLYGEDANSFRPERWLEASPEEERRWDHFSFHFGYGARKCLANNFGLMQLYKVAAEVCAYPIRCLLRYRAHHECRYFVVLKLKLKGRTRIQSVEGRLRVPGFALIAEQDPGHKHNGYINMDLFRA.

An N-terminal signal peptide occupies residues 1–18 (MSPFIFAVTLTFAILALG). N-linked (GlcNAc...) asparagine glycans are attached at residues Asn-52 and Asn-92. Cys-318 contacts heme.

It belongs to the cytochrome P450 family. Heme serves as cofactor.

It functions in the pathway mycotoxin biosynthesis. Cytochrome P450 monooxygenase; part of the gene cluster that mediates the biosynthesis of the secondary metabolite ustiloxin B, an antimitotic tetrapeptide. First, ustA is processed by the subtilisin-like endoprotease Kex2 that is outside the ustiloxin B gene cluster, at the C-terminal side of Arg-Lys, after transfer to Golgi apparatus through the endoplasmic reticulum (ER). Cleavage by KEX2 generates 16 peptides YAIG-I to YAIG-XVI. To process the precursor peptide further, at least two peptidases are necessary to cleave the N-terminal and C-terminal sides of the Tyr-Ala-Ile-Gly core peptide which serves as backbone for the synthesis of ustiloxin B, through cyclization and modification of the tyrosine with a non-protein coding amino acid, norvaline. One of the two peptidases must be the serine peptidase ustP; and the other pepdidase is probably ustH. Macrocyclization of the core peptide derived from ustA requires the tyrosinase ustQ, as well as the homologous oxidases ustYa and ustYb, and leads to the production of the first cyclization product N-desmethylustiloxin F. For the formation of N-desmethylustiloxin F, three oxidation steps are required, hydroxylation at the benzylic position, hydroxylation at either the aromatic ring of Tyr or beta-position of Ile, and oxidative cyclization. UstQ may catalyze the oxidation of a phenol moiety, whereas the ustYa and ustYb are most likely responsible for the remaining two-step oxidations. N-desmethylustiloxin F is then methylated by ustM to yield ustiloxin F which in turn substrate of the cytochrome P450 monooxygenase ustC which catalyzes the formation of S-deoxyustiloxin H. The flavoprotein monooxygenases ustF1 and ustF2 then participate in the modification of the side chain of S-deoxyustiloxin H, leading to the synthesis of an oxime intermediate, via ustiloxin H. Finally, carboxylative dehydration performed by the cysteine desulfurase-like protein ustD yields ustiloxin B. The polypeptide is Cytochrome P450 monooxygenase ustC (Aspergillus flavus (strain ATCC 200026 / FGSC A1120 / IAM 13836 / NRRL 3357 / JCM 12722 / SRRC 167)).